Reading from the N-terminus, the 217-residue chain is UPF0319 protein HS_1349 (217 aa).

The first 21 residues, 1–21 (MKFSFAALASAMLLTSTAAFA), serve as a signal peptide directing secretion.

It belongs to the UPF0319 family.

This is UPF0319 protein HS_1349 from Histophilus somni (strain 129Pt) (Haemophilus somnus).